Reading from the N-terminus, the 488-residue chain is Serine protease HTR4 (488 aa).

The first 35 residues, 1 to 35 (MSRSKMSSQRLWAVRAQFLLLWLLLWAAPVPWAEA), serve as a signal peptide directing secretion. In terms of domain architecture, IGFBP N-terminal spans 40–118 (VSLPCPDACD…RAWLGTCGCA (79 aa)). Cystine bridges form between Cys44/Cys70, Cys48/Cys72, Cys53/Cys73, Cys59/Cys76, Cys84/Cys98, and Cys92/Cys115. The segment at 213–373 (GSGFIVSEDG…IPSDRIRQFL (161 aa)) is serine protease. Residues His229, Asp259, and Ser337 each act as charge relay system in the active site. Residues 384 to 476 (KAPLQKKYLG…LSIIVLRGSQ (93 aa)) form the PDZ domain.

Belongs to the peptidase S1C family.

Its subcellular location is the secreted. Serine protease. In Rattus norvegicus (Rat), this protein is Serine protease HTR4 (Htra4).